A 239-amino-acid chain; its full sequence is DnaA regulatory inactivator Hda (239 aa).

This sequence belongs to the DnaA family. HdA subfamily. In terms of assembly, the active form seems to be an ADP-bound monomer. Forms the RIDA complex (regulatory inactivation of DnaA) of ATP-DnaA, ADP-Hda and the DNA-loaded beta sliding clamp (dnaN).

Its function is as follows. Mediates the interaction of DNA replication initiator protein DnaA with DNA polymerase subunit beta sliding clamp (dnaN). Stimulates hydrolysis of ATP-DnaA to ADP-DnaA, rendering DnaA inactive for reinitiation, a process called regulatory inhibition of DnaA or RIDA. This chain is DnaA regulatory inactivator Hda, found in Yersinia enterocolitica serotype O:8 / biotype 1B (strain NCTC 13174 / 8081).